The following is a 312-amino-acid chain: tRNA dimethylallyltransferase (312 aa).

ATP is bound at residue Gly-11–Thr-18. Thr-13–Thr-18 is a binding site for substrate. The interaction with substrate tRNA stretch occupies residues Asp-36 to Cys-39.

The protein belongs to the IPP transferase family. As to quaternary structure, monomer. Requires Mg(2+) as cofactor.

It catalyses the reaction adenosine(37) in tRNA + dimethylallyl diphosphate = N(6)-dimethylallyladenosine(37) in tRNA + diphosphate. In terms of biological role, catalyzes the transfer of a dimethylallyl group onto the adenine at position 37 in tRNAs that read codons beginning with uridine, leading to the formation of N6-(dimethylallyl)adenosine (i(6)A). The polypeptide is tRNA dimethylallyltransferase (Caldicellulosiruptor saccharolyticus (strain ATCC 43494 / DSM 8903 / Tp8T 6331)).